The chain runs to 193 residues: Urease accessory protein UreE (193 aa).

The interval 138 to 193 (RGAYHSHGAHSHDQGHAAHDHGNEHKHDHGHDHVHGPGCDHDHDHDHGHHHDHKHD) is disordered. Positions 147–193 (HSHDQGHAAHDHGNEHKHDHGHDHVHGPGCDHDHDHDHGHHHDHKHD) are enriched in basic and acidic residues.

This sequence belongs to the UreE family.

Its subcellular location is the cytoplasm. Involved in urease metallocenter assembly. Binds nickel. Probably functions as a nickel donor during metallocenter assembly. The polypeptide is Urease accessory protein UreE (Rhizobium leguminosarum bv. trifolii (strain WSM2304)).